A 205-amino-acid chain; its full sequence is Cytochrome c oxidase subunit 3 (205 aa).

Transmembrane regions (helical) follow at residues 29-49 (TIVFLSQELMFFAGLFAMYFV), 72-92 (ALLITVILVSSSVTCQFGVFA), 104-124 (WFLVTIILGSIFVIGQGYEYI), 142-162 (FFITTGFHALHVIAGVMAFVV), and 184-204 (SYYWHFVDVVWIGLFITIYFI).

In terms of assembly, associates with subunits I, II and IV to form cytochrome c oxidase. The 4 subunit cytochrome c oxidase forms a supercomplex with the menaquinol-cytochrome c reductase complex (cytochrome bc1).

It is found in the cell membrane. The catalysed reaction is 4 Fe(II)-[cytochrome c] + O2 + 8 H(+)(in) = 4 Fe(III)-[cytochrome c] + 2 H2O + 4 H(+)(out). The polypeptide is Cytochrome c oxidase subunit 3 (ctaE) (Corynebacterium glutamicum (strain ATCC 13032 / DSM 20300 / JCM 1318 / BCRC 11384 / CCUG 27702 / LMG 3730 / NBRC 12168 / NCIMB 10025 / NRRL B-2784 / 534)).